The sequence spans 318 residues: Ferrochelatase (318 aa).

Fe cation is bound by residues H194 and E275.

This sequence belongs to the ferrochelatase family.

The protein localises to the cytoplasm. It carries out the reaction heme b + 2 H(+) = protoporphyrin IX + Fe(2+). Its pathway is porphyrin-containing compound metabolism; protoheme biosynthesis; protoheme from protoporphyrin-IX: step 1/1. Catalyzes the ferrous insertion into protoporphyrin IX. The protein is Ferrochelatase of Xanthomonas axonopodis pv. citri (strain 306).